Reading from the N-terminus, the 288-residue chain is Pyrroline-5-carboxylate reductase 3 (288 aa).

Belongs to the pyrroline-5-carboxylate reductase family. In terms of assembly, homodecamer; composed of 5 homodimers.

The protein localises to the cytoplasm. It catalyses the reaction L-proline + NADP(+) = (S)-1-pyrroline-5-carboxylate + NADPH + 2 H(+). It carries out the reaction L-proline + NAD(+) = (S)-1-pyrroline-5-carboxylate + NADH + 2 H(+). It participates in amino-acid biosynthesis; L-proline biosynthesis; L-proline from L-glutamate 5-semialdehyde: step 1/1. Functionally, oxidoreductase that catalyzes the last step in proline biosynthesis, which corresponds to the reduction of pyrroline-5-carboxylate (P5C) to L-proline using NAD(P)H. Proline is synthesized from either glutamate or ornithine; both are converted to P5C, and then to proline via pyrroline-5-carboxylate reductases (PYCRs). PYCR3 is exclusively linked to the biosynthesis of proline from ornithine. This is Pyrroline-5-carboxylate reductase 3 from Danio rerio (Zebrafish).